The sequence spans 621 residues: Chaperone protein HscA homolog (621 aa).

Belongs to the heat shock protein 70 family.

Its function is as follows. Chaperone involved in the maturation of iron-sulfur cluster-containing proteins. Has a low intrinsic ATPase activity which is markedly stimulated by HscB. The polypeptide is Chaperone protein HscA homolog (Cupriavidus pinatubonensis (strain JMP 134 / LMG 1197) (Cupriavidus necator (strain JMP 134))).